The following is a 235-amino-acid chain: Probable septum site-determining protein MinC (235 aa).

Residues 104–125 (KAVRPAPVEPATPSEPPQNANP) form a disordered region. Residues 110–119 (PVEPATPSEP) are compositionally biased toward pro residues.

Belongs to the MinC family. Interacts with MinD and FtsZ.

In terms of biological role, cell division inhibitor that blocks the formation of polar Z ring septums. Rapidly oscillates between the poles of the cell to destabilize FtsZ filaments that have formed before they mature into polar Z rings. Prevents FtsZ polymerization. This chain is Probable septum site-determining protein MinC, found in Salmonella enteritidis PT4 (strain P125109).